Here is a 213-residue protein sequence, read N- to C-terminus: Superoxide dismutase [Fe] (213 aa).

Residues His26, His73, Asp156, and His160 each coordinate Fe cation.

Belongs to the iron/manganese superoxide dismutase family. In terms of assembly, homodimer. Fe cation is required as a cofactor.

It catalyses the reaction 2 superoxide + 2 H(+) = H2O2 + O2. Its function is as follows. Destroys superoxide anion radicals which are normally produced within the cells and which are toxic to biological systems. This chain is Superoxide dismutase [Fe] (sodB), found in Helicobacter pylori (strain J99 / ATCC 700824) (Campylobacter pylori J99).